The chain runs to 491 residues: (1S)-1-hydroxy-luvungin A synthase CYP88A37 (491 aa).

A helical membrane pass occupies residues 5 to 25 (FSWLILALAIFIGTYAFVFGV). Cys439 contacts heme.

Belongs to the cytochrome P450 family. Heme serves as cofactor. In terms of tissue distribution, expressed in maturing fruits and in juice vesicles.

It localises to the membrane. The catalysed reaction is luvungin A + reduced [NADPH--hemoprotein reductase] + O2 = (1S)-1-hydroxy-luvungin A + oxidized [NADPH--hemoprotein reductase] + H2O + H(+). It participates in secondary metabolite biosynthesis; terpenoid biosynthesis. Monooxygenase involved in the biosynthesis of limonoids triterpene natural products such as limonin, a compound with insecticidal activity responsible for the bitter taste in citrus. Catalyzes the conversion of luvungin A to (1S)-1-hydroxy-luvungin A. This Citrus sinensis (Sweet orange) protein is (1S)-1-hydroxy-luvungin A synthase CYP88A37.